We begin with the raw amino-acid sequence, 1391 residues long: DNA-directed RNA polymerase subunit beta'' (1391 aa).

Zn(2+) contacts are provided by Cys-224, Cys-295, Cys-302, and Cys-305.

It belongs to the RNA polymerase beta' chain family. RpoC2 subfamily. In terms of assembly, in plastids the minimal PEP RNA polymerase catalytic core is composed of four subunits: alpha, beta, beta', and beta''. When a (nuclear-encoded) sigma factor is associated with the core the holoenzyme is formed, which can initiate transcription. It depends on Zn(2+) as a cofactor.

The protein localises to the plastid. It localises to the chloroplast. The catalysed reaction is RNA(n) + a ribonucleoside 5'-triphosphate = RNA(n+1) + diphosphate. In terms of biological role, DNA-dependent RNA polymerase catalyzes the transcription of DNA into RNA using the four ribonucleoside triphosphates as substrates. The sequence is that of DNA-directed RNA polymerase subunit beta'' from Buxus microphylla (Littleleaf boxwood).